A 445-amino-acid chain; its full sequence is 8-amino-7-oxononanoate synthase (445 aa).

R40 contributes to the substrate binding site. A pyridoxal 5'-phosphate-binding site is contributed by 131-132 (GY). H156 contacts substrate. 3 residues coordinate pyridoxal 5'-phosphate: S202, H230, and T258. K261 carries the post-translational modification N6-(pyridoxal phosphate)lysine. T377 lines the substrate pocket. The interval 408-445 (ASEGQTRRDAEQPPRSLRSLPPEGAAASLGAARRETAA) is disordered.

Belongs to the class-II pyridoxal-phosphate-dependent aminotransferase family. BioF subfamily. In terms of assembly, homodimer. Pyridoxal 5'-phosphate is required as a cofactor.

It catalyses the reaction 6-carboxyhexanoyl-[ACP] + L-alanine + H(+) = (8S)-8-amino-7-oxononanoate + holo-[ACP] + CO2. It functions in the pathway cofactor biosynthesis; biotin biosynthesis. Catalyzes the decarboxylative condensation of pimeloyl-[acyl-carrier protein] and L-alanine to produce 8-amino-7-oxononanoate (AON), [acyl-carrier protein], and carbon dioxide. This is 8-amino-7-oxononanoate synthase from Burkholderia ambifaria (strain MC40-6).